The following is a 299-amino-acid chain: Coenzyme PQQ synthesis protein B (299 aa).

The protein belongs to the PqqB family.

The protein operates within cofactor biosynthesis; pyrroloquinoline quinone biosynthesis. In terms of biological role, may be involved in the transport of PQQ or its precursor to the periplasm. In Methylobacterium sp. (strain 4-46), this protein is Coenzyme PQQ synthesis protein B.